We begin with the raw amino-acid sequence, 596 residues long: Selenocysteine-specific elongation factor (596 aa).

Residues 5–217 enclose the tr-type G domain; it reads RVNVNVGVLG…LLTSQISIPT (213 aa). The interval 14-21 is G1; it reads GHIDSGKT. GDP-binding residues include Gly-19, Thr-21, and Ala-22. 3 residues coordinate GTP: Gly-19, Thr-21, and Ala-22. A Mg(2+)-binding site is contributed by Thr-21. A G2 region spans residues 46–50; sequence GITLD. Mg(2+) contacts are provided by Thr-48 and Asp-92. A G3 region spans residues 92 to 95; it reads DCPG. A G4 region spans residues 146 to 149; sequence NKID. Positions 149 and 187 each coordinate GDP. GTP-binding residues include Asp-149 and Lys-187. The tract at residues 185 to 187 is G5; sequence AAK. The residue at position 537 (Ser-537) is a Phosphoserine. The residue at position 545 (Thr-545) is a Phosphothreonine. Residues 547–553 carry the Nuclear localization signal motif; that stretch reads ALKKRAR. The tract at residues 548 to 573 is disordered; it reads LKKRARAGRGEATRQEESAERSEPSQ. Basic and acidic residues predominate over residues 555–571; it reads GRGEATRQEESAERSEP. Arg-556 carries the post-translational modification Omega-N-methylarginine.

This sequence belongs to the TRAFAC class translation factor GTPase superfamily. Classic translation factor GTPase family. SelB subfamily. Requires Mg(2+) as cofactor. The cofactor is Mn(2+).

The protein resides in the cytoplasm. The protein localises to the nucleus. It carries out the reaction GTP + H2O = GDP + phosphate + H(+). In terms of biological role, translation factor required for the incorporation of the rare amino acid selenocysteine encoded by UGA codons. Replaces the eRF1-eRF3-GTP ternary complex for the insertion of selenocysteine directed by the UGA codon. Insertion of selenocysteine at UGA codons is mediated by SECISBP2 and EEFSEC: SECISBP2 (1) specifically binds the SECIS sequence once the 80S ribosome encounters an in-frame UGA codon and (2) contacts the RPS27A/eS31 of the 40S ribosome before ribosome stalling. (3) GTP-bound EEFSEC then delivers selenocysteinyl-tRNA(Sec) to the 80S ribosome and adopts a preaccommodated state conformation. (4) After GTP hydrolysis, EEFSEC dissociates from the assembly, selenocysteinyl-tRNA(Sec) accommodates, and peptide bond synthesis and selenoprotein elongation occur. This chain is Selenocysteine-specific elongation factor, found in Homo sapiens (Human).